We begin with the raw amino-acid sequence, 268 residues long: Diaminopimelate epimerase (268 aa).

3 residues coordinate substrate: asparagine 13, glutamine 46, and asparagine 64. Cysteine 73 functions as the Proton donor in the catalytic mechanism. Substrate-binding positions include 74 to 75 (GN), asparagine 148, asparagine 181, and 199 to 200 (ER). The Proton acceptor role is filled by cysteine 208. 209–210 (GT) contributes to the substrate binding site.

It belongs to the diaminopimelate epimerase family. Homodimer.

It is found in the cytoplasm. The enzyme catalyses (2S,6S)-2,6-diaminopimelate = meso-2,6-diaminopimelate. Its pathway is amino-acid biosynthesis; L-lysine biosynthesis via DAP pathway; DL-2,6-diaminopimelate from LL-2,6-diaminopimelate: step 1/1. Functionally, catalyzes the stereoinversion of LL-2,6-diaminopimelate (L,L-DAP) to meso-diaminopimelate (meso-DAP), a precursor of L-lysine and an essential component of the bacterial peptidoglycan. This chain is Diaminopimelate epimerase, found in Sphingopyxis alaskensis (strain DSM 13593 / LMG 18877 / RB2256) (Sphingomonas alaskensis).